Here is a 253-residue protein sequence, read N- to C-terminus: Tetraspanin-11 (253 aa).

Transmembrane regions (helical) follow at residues 19–39 (LLFI…AVGV), 63–83 (ILIF…GAVI), 90–110 (LSAY…AGVL), and 220–240 (LLLM…GMIL).

Belongs to the tetraspanin (TM4SF) family.

It is found in the membrane. This is Tetraspanin-11 (TSPAN11) from Bos taurus (Bovine).